The chain runs to 217 residues: Large ribosomal subunit protein uL3 (217 aa).

The disordered stretch occupies residues 129 to 162; the sequence is SRGPMSHGSKNHRAPGSTGAGTTPGRIYPGKRMA. Residues 142–153 show a composition bias toward low complexity; that stretch reads APGSTGAGTTPG.

This sequence belongs to the universal ribosomal protein uL3 family. As to quaternary structure, part of the 50S ribosomal subunit. Forms a cluster with proteins L14 and L19.

Its function is as follows. One of the primary rRNA binding proteins, it binds directly near the 3'-end of the 23S rRNA, where it nucleates assembly of the 50S subunit. The chain is Large ribosomal subunit protein uL3 from Prochlorococcus marinus (strain MIT 9215).